We begin with the raw amino-acid sequence, 279 residues long: Gas vesicle protein L2 (279 aa).

It belongs to the gas vesicle GvpF/GvpL family. As to quaternary structure, gvpF to GvpM interact with each other in vitro, and may form multi-subunit complex(es). Interacts with GvpC, GvpN and GvpO.

Its subcellular location is the gas vesicle. Its function is as follows. Proteins GvpF to GvpM might be involved in nucleating gas vesicle formation. A minor component of the gas vesicle. Gas vesicles are hollow, gas filled proteinaceous nanostructures found in several microbial planktonic microorganisms. They allow positioning of halobacteria at the optimal depth for growth in the poorly aerated, shallow brine pools of their habitat. In terms of biological role, expression of 2 c-vac DNA fragments containing 2 divergently transcribed regions (gvpE-gvpF-gvpG-gvpH-gvpI-gvpJ-gvpK-gvpL-gvpM and gvpA-gvpC-gvpN-gvpO) allows H.volcanii to produce gas vesicles. The polypeptide is Gas vesicle protein L2 (Halobacterium salinarum (strain ATCC 700922 / JCM 11081 / NRC-1) (Halobacterium halobium)).